A 192-amino-acid chain; its full sequence is UPF0312 protein ECA1782 (192 aa).

The signal sequence occupies residues 1–23 (MLKKTLLSLTAVSMLASAGSALA).

Belongs to the UPF0312 family. Type 1 subfamily.

The protein resides in the periplasm. The sequence is that of UPF0312 protein ECA1782 from Pectobacterium atrosepticum (strain SCRI 1043 / ATCC BAA-672) (Erwinia carotovora subsp. atroseptica).